A 569-amino-acid polypeptide reads, in one-letter code: Potassium-transporting ATPase potassium-binding subunit (569 aa).

A run of 10 helical transmembrane segments spans residues 3 to 23, 68 to 88, 136 to 156, 179 to 199, 259 to 279, 284 to 304, 384 to 404, 422 to 442, 490 to 510, and 534 to 554; these read LMEY…SPVL, AASL…VLML, VGLA…AVAV, VLYV…GQGV, LQML…GGAV, HAWT…CSLY, GLYG…LMVG, AMLA…VAAV, IALA…GVAG, and LLLT…ALAL.

Belongs to the KdpA family. As to quaternary structure, the system is composed of three essential subunits: KdpA, KdpB and KdpC.

The protein resides in the cell inner membrane. Part of the high-affinity ATP-driven potassium transport (or Kdp) system, which catalyzes the hydrolysis of ATP coupled with the electrogenic transport of potassium into the cytoplasm. This subunit binds the periplasmic potassium ions and delivers the ions to the membrane domain of KdpB through an intramembrane tunnel. The chain is Potassium-transporting ATPase potassium-binding subunit from Nitratidesulfovibrio vulgaris (strain ATCC 29579 / DSM 644 / CCUG 34227 / NCIMB 8303 / VKM B-1760 / Hildenborough) (Desulfovibrio vulgaris).